Consider the following 323-residue polypeptide: Glutamyl-Q tRNA(Asp) synthetase (323 aa).

Residues 5-9 (RFAPT) and Glu41 each bind L-glutamate. Positions 8 to 18 (PTPSGALHLGN) match the 'HIGH' region motif. 4 residues coordinate Zn(2+): Cys105, Cys107, Tyr129, and Cys133. L-glutamate-binding residues include Tyr193 and Arg211. Residues 249–253 (RLAKR) carry the 'KMSKS' region motif. Lys252 contributes to the ATP binding site.

This sequence belongs to the class-I aminoacyl-tRNA synthetase family. GluQ subfamily. Zn(2+) serves as cofactor.

Its function is as follows. Catalyzes the tRNA-independent activation of glutamate in presence of ATP and the subsequent transfer of glutamate onto a tRNA(Asp). Glutamate is transferred on the 2-amino-5-(4,5-dihydroxy-2-cyclopenten-1-yl) moiety of the queuosine in the wobble position of the QUC anticodon. In Symbiobacterium thermophilum (strain DSM 24528 / JCM 14929 / IAM 14863 / T), this protein is Glutamyl-Q tRNA(Asp) synthetase.